Here is a 406-residue protein sequence, read N- to C-terminus: Coenzyme A biosynthesis bifunctional protein CoaBC (406 aa).

The segment at 2–190 (SLAGKKIVLG…SPVNDLKHLN (189 aa)) is phosphopantothenoylcysteine decarboxylase. C158 acts as the Proton donor in catalysis. A phosphopantothenate--cysteine ligase region spans residues 191 to 406 (IMITAGPTRE…VTRYDEKNRR (216 aa)). Residues 273–275 (GCA), D279, K289, 308–311 (PDIV), F327, K341, and K345 contribute to the CTP site.

In the N-terminal section; belongs to the HFCD (homo-oligomeric flavin containing Cys decarboxylase) superfamily. This sequence in the C-terminal section; belongs to the PPC synthetase family. Mg(2+) is required as a cofactor. Requires FMN as cofactor.

The enzyme catalyses N-[(R)-4-phosphopantothenoyl]-L-cysteine + H(+) = (R)-4'-phosphopantetheine + CO2. It carries out the reaction (R)-4'-phosphopantothenate + L-cysteine + CTP = N-[(R)-4-phosphopantothenoyl]-L-cysteine + CMP + diphosphate + H(+). The protein operates within cofactor biosynthesis; coenzyme A biosynthesis; CoA from (R)-pantothenate: step 2/5. Its pathway is cofactor biosynthesis; coenzyme A biosynthesis; CoA from (R)-pantothenate: step 3/5. Its function is as follows. Catalyzes two sequential steps in the biosynthesis of coenzyme A. In the first step cysteine is conjugated to 4'-phosphopantothenate to form 4-phosphopantothenoylcysteine. In the second step the latter compound is decarboxylated to form 4'-phosphopantotheine. The sequence is that of Coenzyme A biosynthesis bifunctional protein CoaBC from Escherichia coli O6:H1 (strain CFT073 / ATCC 700928 / UPEC).